A 416-amino-acid polypeptide reads, in one-letter code: Enolase (416 aa).

Gln-160 is a (2R)-2-phosphoglycerate binding site. Glu-204 acts as the Proton donor in catalysis. Mg(2+)-binding residues include Asp-239, Glu-282, and Asp-308. Lys-333, Arg-362, Ser-363, and Lys-384 together coordinate (2R)-2-phosphoglycerate. Lys-333 serves as the catalytic Proton acceptor.

The protein belongs to the enolase family. Mg(2+) serves as cofactor.

It localises to the cytoplasm. It is found in the secreted. Its subcellular location is the cell surface. The enzyme catalyses (2R)-2-phosphoglycerate = phosphoenolpyruvate + H2O. Its pathway is carbohydrate degradation; glycolysis; pyruvate from D-glyceraldehyde 3-phosphate: step 4/5. Functionally, catalyzes the reversible conversion of 2-phosphoglycerate (2-PG) into phosphoenolpyruvate (PEP). It is essential for the degradation of carbohydrates via glycolysis. The protein is Enolase of Metallosphaera sedula (strain ATCC 51363 / DSM 5348 / JCM 9185 / NBRC 15509 / TH2).